The sequence spans 513 residues: Flavonoid 3',5'-hydroxylase (513 aa).

Cys-446 is a binding site for heme.

Belongs to the cytochrome P450 family. Requires heme as cofactor. As to expression, hypocotyl tissues.

The enzyme catalyses a 3',5'-unsubstituted flavanone + 2 reduced [NADPH--hemoprotein reductase] + 2 O2 = a 3',5'-dihydroxyflavanone + 2 oxidized [NADPH--hemoprotein reductase] + 2 H2O + 2 H(+). It participates in pigment biosynthesis; anthocyanin biosynthesis. Functionally, catalyzes the 3'5'-hydroxylation of naringenin and eriodictyol to form 5,7,3,'4',5'-pentahydroxyflavanone and 3',5'-hydroxylation of dihydrokaempferol and dihydroquercetin to form dihydromyricetin. The protein is Flavonoid 3',5'-hydroxylase (CYP75A2) of Solanum melongena (Eggplant).